The chain runs to 535 residues: Transmembrane protein 151 homolog (535 aa).

A run of 3 helical transmembrane segments spans residues 27–47 (GYGKCLICSLLLVLCFFYATY), 73–93 (YNFVPIVFGLMLYIVYLMECW), and 254–274 (PWFLHPIVFWFFSILVLSWPL). A disordered region spans residues 498 to 535 (ASISHSSSKDLKSLTLKNNNGAANNNNNNNNENPEEQP). Over residues 510 to 529 (SLTLKNNNGAANNNNNNNNE) the composition is skewed to low complexity.

Belongs to the TMEM151 family.

It localises to the membrane. This Caenorhabditis briggsae protein is Transmembrane protein 151 homolog.